A 293-amino-acid polypeptide reads, in one-letter code: uncharacterized protein (293 aa).

This is an uncharacterized protein from Bos taurus (Bovine).